Here is a 218-residue protein sequence, read N- to C-terminus: Outer-membrane lipoprotein LolB (218 aa).

Positions 1 to 20 (MSQVIRTLALTGLALAGLSG) are cleaved as a signal peptide. A lipid anchor (N-palmitoyl cysteine) is attached at C21. A lipid anchor (S-diacylglycerol cysteine) is attached at C21.

Belongs to the LolB family. In terms of assembly, monomer.

It localises to the cell outer membrane. Its function is as follows. Plays a critical role in the incorporation of lipoproteins in the outer membrane after they are released by the LolA protein. This chain is Outer-membrane lipoprotein LolB, found in Xanthomonas campestris pv. campestris (strain 8004).